We begin with the raw amino-acid sequence, 350 residues long: GTP 3',8-cyclase (350 aa).

The Radical SAM core domain occupies 27–245 (TFGRIATDLR…LRAHFTLVPD (219 aa)). Residue Arg-36 coordinates GTP. Positions 43 and 47 each coordinate [4Fe-4S] cluster. Tyr-49 contacts S-adenosyl-L-methionine. Cys-50 is a [4Fe-4S] cluster binding site. Arg-87 is a GTP binding site. S-adenosyl-L-methionine is bound at residue Gly-91. Residue Thr-118 coordinates GTP. Residue Ser-142 coordinates S-adenosyl-L-methionine. Lys-179 provides a ligand contact to GTP. Residue Met-213 coordinates S-adenosyl-L-methionine. 2 residues coordinate [4Fe-4S] cluster: Cys-277 and Cys-280. 282–284 (RTR) serves as a coordination point for GTP. Cys-294 lines the [4Fe-4S] cluster pocket.

Belongs to the radical SAM superfamily. MoaA family. As to quaternary structure, monomer and homodimer. The cofactor is [4Fe-4S] cluster.

It carries out the reaction GTP + AH2 + S-adenosyl-L-methionine = (8S)-3',8-cyclo-7,8-dihydroguanosine 5'-triphosphate + 5'-deoxyadenosine + L-methionine + A + H(+). The protein operates within cofactor biosynthesis; molybdopterin biosynthesis. Catalyzes the cyclization of GTP to (8S)-3',8-cyclo-7,8-dihydroguanosine 5'-triphosphate. This chain is GTP 3',8-cyclase, found in Mycobacterium sp. (strain JLS).